We begin with the raw amino-acid sequence, 343 residues long: Glutamine synthetase (343 aa).

The region spanning 3–87 is the GS beta-grasp domain; sequence FKAEYIWIDG…CEVLNIDLTP (85 aa). The region spanning 92 to 343 is the GS catalytic domain; it reads TRAALAEVAE…CSALEKAGQV (252 aa). The Mg(2+) site is built by E113, E115, E174, and E181. Residue E279 coordinates L-glutamate.

It belongs to the glutamine synthetase family. Homooctamer and homotetramer. It depends on Mg(2+) as a cofactor.

It is found in the cytoplasm. It carries out the reaction L-glutamate + NH4(+) + ATP = L-glutamine + ADP + phosphate + H(+). Functionally, catalyzes the ATP-dependent biosynthesis of glutamine from glutamate and ammonia. This is Glutamine synthetase from Streptomyces viridochromogenes.